We begin with the raw amino-acid sequence, 659 residues long: Biosynthetic arginine decarboxylase 2 (659 aa).

Residue K119 is modified to N6-(pyridoxal phosphate)lysine. 311-321 (LNVGGGLAVDY) contributes to the substrate binding site.

The protein belongs to the Orn/Lys/Arg decarboxylase class-II family. SpeA subfamily. It depends on Mg(2+) as a cofactor. The cofactor is pyridoxal 5'-phosphate.

The catalysed reaction is L-arginine + H(+) = agmatine + CO2. Functionally, catalyzes the biosynthesis of agmatine from arginine. This chain is Biosynthetic arginine decarboxylase 2 (speA2), found in Synechocystis sp. (strain ATCC 27184 / PCC 6803 / Kazusa).